A 489-amino-acid chain; its full sequence is L-asparagine permease (489 aa).

The next 12 helical transmembrane spans lie at 38–58 (HVNM…GAGG), 62–82 (DAGP…FFVV), 113–133 (VAGW…ITAI), 150–170 (VLAL…VKIF), 175–195 (FWFA…GIFL), 223–243 (VMPV…LELV), 268–288 (VALF…SSLY), 302–322 (IGVP…AMSS), 357–377 (YGGI…NYLV), 382–402 (FEIV…IIMI), 426–446 (SPVT…LMWN), and 452–472 (RKTV…WFGV).

Belongs to the amino acid-polyamine-organocation (APC) superfamily. Amino acid transporter (AAT) (TC 2.A.3.1) family.

Its subcellular location is the cell membrane. The chain is L-asparagine permease (ansP) from Streptomyces coelicolor (strain ATCC BAA-471 / A3(2) / M145).